The following is a 122-amino-acid chain: Large ribosomal subunit protein uL18 (122 aa).

A disordered region spans residues 1-27 (MATLSKKQQTQKRHKRLRRHLNGTNHR). Positions 9–27 (QTQKRHKRLRRHLNGTNHR) are enriched in basic residues.

It belongs to the universal ribosomal protein uL18 family. In terms of assembly, part of the 50S ribosomal subunit; part of the 5S rRNA/L5/L18/L25 subcomplex. Contacts the 5S and 23S rRNAs.

In terms of biological role, this is one of the proteins that bind and probably mediate the attachment of the 5S RNA into the large ribosomal subunit, where it forms part of the central protuberance. This is Large ribosomal subunit protein uL18 from Prochlorococcus marinus (strain MIT 9211).